A 66-amino-acid polypeptide reads, in one-letter code: UPF0457 protein BA_2525/GBAA_2525/BAS2348 (66 aa).

It belongs to the UPF0457 family.

This Bacillus anthracis protein is UPF0457 protein BA_2525/GBAA_2525/BAS2348.